A 315-amino-acid chain; its full sequence is tRNA dimethylallyltransferase (315 aa).

13–20 (GPTAVGKT) is an ATP binding site. 15-20 (TAVGKT) contributes to the substrate binding site. An interaction with substrate tRNA region spans residues 38–41 (DSMQ).

It belongs to the IPP transferase family. Monomer. Mg(2+) is required as a cofactor.

It catalyses the reaction adenosine(37) in tRNA + dimethylallyl diphosphate = N(6)-dimethylallyladenosine(37) in tRNA + diphosphate. Functionally, catalyzes the transfer of a dimethylallyl group onto the adenine at position 37 in tRNAs that read codons beginning with uridine, leading to the formation of N6-(dimethylallyl)adenosine (i(6)A). The protein is tRNA dimethylallyltransferase of Staphylococcus saprophyticus subsp. saprophyticus (strain ATCC 15305 / DSM 20229 / NCIMB 8711 / NCTC 7292 / S-41).